A 427-amino-acid polypeptide reads, in one-letter code: Flotillin-1 (427 aa).

Phosphoserine occurs at positions 19, 163, and 385. Threonine 387 carries the post-translational modification Phosphothreonine.

It belongs to the band 7/mec-2 family. Flotillin subfamily. In terms of assembly, heterooligomeric complex of flotillin-1 and flotillin-2 and caveolin-1 and caveolin-2. Interacts with ECPAS.

The protein localises to the cell membrane. It is found in the endosome. Its subcellular location is the membrane. It localises to the caveola. The protein resides in the melanosome. The protein localises to the membrane raft. May act as a scaffolding protein within caveolar membranes, functionally participating in formation of caveolae or caveolae-like vesicles. The chain is Flotillin-1 (FLOT1) from Pongo abelii (Sumatran orangutan).